The chain runs to 1201 residues: Putative disease resistance protein At4g19050 (1201 aa).

33–40 (GEAGIGKT) provides a ligand contact to ATP. 14 LRR repeats span residues 469–491 (KLRV…SGLQ), 492–514 (GLHV…FFKN), 517–539 (QLQS…EKLS), 540–562 (MLRC…IVET), 680–701 (ELRI…IADV), 703–725 (NLNK…EKLT), 726–748 (HLEV…FGEM), 750–771 (YLHE…ISEL), 773–795 (NLKE…EKLT), 796–818 (NLEI…FENL), 820–841 (CLHK…ISEL), 843–865 (NLKE…EKLT), 866–888 (HLVI…FESM), and 890–911 (YLCE…PKQS). Residues 1162-1180 (DEPRIGARITDEISEDQPH) show a composition bias toward basic and acidic residues. The interval 1162–1201 (DEPRIGARITDEISEDQPHKNTIGPETQTPTQPTKATDTV) is disordered. A compositionally biased stretch (polar residues) spans 1185-1201 (GPETQTPTQPTKATDTV).

Belongs to the disease resistance NB-LRR family.

Functionally, potential disease resistance protein. This is Putative disease resistance protein At4g19050 from Arabidopsis thaliana (Mouse-ear cress).